A 748-amino-acid chain; its full sequence is Disintegrin and metalloproteinase domain-containing protein 10 (748 aa).

The N-terminal stretch at 1–19 (MVLLRVLILLLSWAAGMGG) is a signal peptide. The propeptide occupies 20 to 213 (QYGNPLNKYI…NGPELLRKKR (194 aa)). At 20–672 (QYGNPLNKYI…SPELYENIAE (653 aa)) the chain is on the extracellular side. A Cysteine switch motif is present at residues 171–178 (GGCADHSV). Residue Cys173 coordinates Zn(2+). A Peptidase M12B domain is found at 220–456 (NTCQLYIQTD…KRNNCFVESG (237 aa)). Cystine bridges form between Cys222-Cys313, Cys344-Cys451, Cys399-Cys435, Cys460-Cys495, Cys471-Cys484, Cys473-Cys479, Cys483-Cys515, Cys503-Cys511, Cys510-Cys536, Cys524-Cys543, Cys530-Cys562, Cys555-Cys567, Cys572-Cys598, Cys580-Cys607, Cys582-Cys597, Cys594-Cys639, and Cys632-Cys645. 2 N-linked (GlcNAc...) asparagine glycosylation sites follow: Asn267 and Asn278. His383 lines the Zn(2+) pocket. Glu384 is an active-site residue. His387 and His393 together coordinate Zn(2+). A glycan (N-linked (GlcNAc...) asparagine) is linked at Asn439. Residues 457 to 551 (QPICGNGMVE…LCPASDPKPN (95 aa)) enclose the Disintegrin domain. Asn551 is a glycosylation site (N-linked (GlcNAc...) asparagine). A helical membrane pass occupies residues 673-693 (WIVAHWWAVLLMGIALIMLMA). Residues 694–748 (GFIKICSVHTPSSNPKLPPPKPLPGTLKRRRPPQPIQQPQRQRPRESYQMGHMRR) lie on the Cytoplasmic side of the membrane. The segment at 704–748 (PSSNPKLPPPKPLPGTLKRRRPPQPIQQPQRQRPRESYQMGHMRR) is disordered. Residues 708–715 (PKLPPPKP) carry the SH3-binding motif. Thr719 carries the phosphothreonine; by FAM20C modification. An SH3-binding motif is present at residues 722–728 (RRRPPQP). The tract at residues 734–748 (RQRPRESYQMGHMRR) is interaction with AP2A1, AP2A2 and AP2M1.

As to quaternary structure, forms a ternary EFNA5-EPHA3-ADAM10 complex mediating EFNA5 extracellular domain shedding by ADAM10 which regulates the EFNA5-EPHA3 complex internalization and function, the cleavage occurs in trans, with ADAM10 and its substrate being on the membranes of opposing cells. Interacts with the clathrin adapter AP2 complex subunits AP2A1, AP2A2, AP2B1, and AP2M1; this interaction facilitates ADAM10 endocytosis from the plasma membrane during long-term potentiation in hippocampal neurons. Forms a ternary complex composed of ADAM10, EPHA4 and CADH1; within the complex, ADAM10 cleaves CADH1 which disrupts adherens junctions. Interacts with EPHA2. Interacts with NGF in a divalent cation-dependent manner. Interacts with TSPAN14; the interaction promotes ADAM10 maturation and cell surface expression. Interacts with TSPAN5, TSPAN10, TSPAN14, TSPAN15, TSPAN17 and TSPAN33; these interactions regulate ADAM10 substrate specificity, endocytosis and turnover. Interacts (via extracellular domain) with TSPAN33 (via extracellular domain) and (via cytoplasmic domain) with AFDN; interaction with TSPAN33 allows the docking of ADAM10 to zonula adherens through a PDZ11-dependent interaction between TSPAN33 and PLEKHA7 while interaction with AFDN locks ADAM10 at zonula adherens. Interacts with DLG1; this interaction recruits ADAM10 to the cell membrane during long-term depression in hippocampal neurons. Interacts (via extracellular domain) with BACE1 (via extracellular domain). Interacts with FAM171A1. In terms of assembly, (Microbial infection) Interacts with S.aureus hly; this interaction is necessary for toxin pore formation, disruption of focal adhesions and S.aureus hly-mediated cytotoxicity. Requires Zn(2+) as cofactor. The precursor is cleaved by furin and PCSK7. In terms of tissue distribution, expressed in the brain (at protein level). Expressed in spleen, lymph node, thymus, peripheral blood leukocyte, bone marrow, cartilage, chondrocytes and fetal liver.

Its subcellular location is the cell membrane. It localises to the golgi apparatus membrane. The protein resides in the cytoplasmic vesicle. It is found in the clathrin-coated vesicle. The protein localises to the cell projection. Its subcellular location is the axon. It localises to the dendrite. The protein resides in the cell junction. It is found in the adherens junction. The protein localises to the cytoplasm. It catalyses the reaction Endopeptidase of broad specificity.. With respect to regulation, catalytically inactive when the propeptide is intact and associated with the mature enzyme. The disintegrin and cysteine-rich regions modulate access of substrates to exerts an inhibitory effect on the cleavage of ADAM10 substrates. Transmembrane metalloprotease which mediates the ectodomain shedding of a myriad of transmembrane proteins, including adhesion proteins, growth factor precursors and cytokines being essential for development and tissue homeostasis. Associates with six members of the tetraspanin superfamily TspanC8 which regulate its exit from the endoplasmic reticulum and its substrate selectivity. Cleaves the membrane-bound precursor of TNF-alpha at '76-Ala-|-Val-77' to its mature soluble form. Responsible for the proteolytical release of soluble JAM3 from endothelial cells surface. Responsible for the proteolytic release of several other cell-surface proteins, including heparin-binding epidermal growth-like factor, ephrin-A2, CD44, CDH2 and for constitutive and regulated alpha-secretase cleavage of amyloid precursor protein (APP). Contributes to the normal cleavage of the cellular prion protein. Involved in the cleavage of the adhesion molecule L1 at the cell surface and in released membrane vesicles, suggesting a vesicle-based protease activity. Also controls the proteolytic processing of Notch and mediates lateral inhibition during neurogenesis. Required for the development of type 1 transitional B cells into marginal zone B cells, probably by cleaving Notch. Responsible for the FasL ectodomain shedding and for the generation of the remnant ADAM10-processed FasL (FasL APL) transmembrane form. Also cleaves the ectodomain of the integral membrane proteins CORIN and ITM2B. Mediates the proteolytic cleavage of LAG3, leading to release the secreted form of LAG3. Mediates the proteolytic cleavage of IL6R and IL11RA, leading to the release of secreted forms of IL6R and IL11RA. Enhances the cleavage of CHL1 by BACE1. Cleaves NRCAM. Cleaves TREM2, resulting in shedding of the TREM2 ectodomain. Involved in the development and maturation of glomerular and coronary vasculature. During development of the cochlear organ of Corti, promotes pillar cell separation by forming a ternary complex with CADH1 and EPHA4 and cleaving CADH1 at adherens junctions. May regulate the EFNA5-EPHA3 signaling. Regulates leukocyte transmigration as a sheddase for the adherens junction protein VE-cadherin/CDH5 in endothelial cells. Functionally, (Microbial infection) Promotes the cytotoxic activity of S.aureus hly by binding to the toxin at zonula adherens and promoting formation of toxin pores. This chain is Disintegrin and metalloproteinase domain-containing protein 10, found in Homo sapiens (Human).